The sequence spans 642 residues: Probable serine/threonine-protein kinase drkA (642 aa).

The signal sequence occupies residues 1–23 (MKKLPFLIIIIYIFLILISISSS). Over 24–322 (IDYNYNNDID…KPTISLLKKY (299 aa)) the chain is Extracellular. Positions 106–128 (SENSGSGSNSNSNSKNTDSSTGP) are enriched in low complexity. The segment at 106–136 (SENSGSGSNSNSNSKNTDSSTGPTPSPISIN) is disordered. Residues Asn136, Asn140, Asn158, Asn244, and Asn271 are each glycosylated (N-linked (GlcNAc...) asparagine). The helical transmembrane segment at 323-343 (LIIGFSIVGGLLIIGGCFLLI) threads the bilayer. The Cytoplasmic segment spans residues 344 to 642 (RNRYRSSGYY…SDLQYVRQQL (299 aa)). The region spanning 374 to 627 (IKIGVRIGKG…EQCLERLESI (254 aa)) is the Protein kinase domain. ATP-binding positions include 380–388 (IGKGNYGEV) and Lys401. The active-site Proton acceptor is the Asp497.

Belongs to the protein kinase superfamily. TKL Ser/Thr protein kinase family.

It is found in the membrane. It carries out the reaction L-seryl-[protein] + ATP = O-phospho-L-seryl-[protein] + ADP + H(+). It catalyses the reaction L-threonyl-[protein] + ATP = O-phospho-L-threonyl-[protein] + ADP + H(+). This chain is Probable serine/threonine-protein kinase drkA (drkA), found in Dictyostelium discoideum (Social amoeba).